The primary structure comprises 371 residues: Aminomethyltransferase (371 aa).

The protein belongs to the GcvT family. As to quaternary structure, the glycine cleavage system is composed of four proteins: P, T, L and H.

It catalyses the reaction N(6)-[(R)-S(8)-aminomethyldihydrolipoyl]-L-lysyl-[protein] + (6S)-5,6,7,8-tetrahydrofolate = N(6)-[(R)-dihydrolipoyl]-L-lysyl-[protein] + (6R)-5,10-methylene-5,6,7,8-tetrahydrofolate + NH4(+). Functionally, the glycine cleavage system catalyzes the degradation of glycine. The chain is Aminomethyltransferase from Leptospira interrogans serogroup Icterohaemorrhagiae serovar Lai (strain 56601).